Consider the following 550-residue polypeptide: Hydroxylamine reductase (550 aa).

Positions 3, 6, 18, and 25 each coordinate [2Fe-2S] cluster. The hybrid [4Fe-2O-2S] cluster site is built by His249, Glu273, Cys317, Cys405, Cys433, Cys458, Glu492, and Lys494. A Cysteine persulfide modification is found at Cys405.

The protein belongs to the HCP family. Requires [2Fe-2S] cluster as cofactor. The cofactor is hybrid [4Fe-2O-2S] cluster.

It is found in the cytoplasm. The enzyme catalyses A + NH4(+) + H2O = hydroxylamine + AH2 + H(+). Functionally, catalyzes the reduction of hydroxylamine to form NH(3) and H(2)O. This is Hydroxylamine reductase from Yersinia pseudotuberculosis serotype IB (strain PB1/+).